Consider the following 470-residue polypeptide: Zinc finger CCCH domain-containing protein 7 (470 aa).

The disordered stretch occupies residues Ala-122–His-144. Over residues Gln-131 to Arg-142 the composition is skewed to polar residues. C3H1-type zinc fingers lie at residues Ala-240 to Ser-269, Val-273 to Ile-294, Pro-295 to Val-321, Asn-322 to Asn-349, and Cys-350 to Asn-372. Residues Pro-370–Arg-381 show a composition bias toward basic residues. The segment at Pro-370–Asn-389 is disordered.

In terms of biological role, possesses RNA-binding and ribonuclease activities in vitro. The chain is Zinc finger CCCH domain-containing protein 7 from Arabidopsis thaliana (Mouse-ear cress).